Here is a 252-residue protein sequence, read N- to C-terminus: Probable transcriptional regulatory protein Kole_1935 (252 aa).

This sequence belongs to the TACO1 family.

It localises to the cytoplasm. The protein is Probable transcriptional regulatory protein Kole_1935 of Kosmotoga olearia (strain ATCC BAA-1733 / DSM 21960 / TBF 19.5.1).